The primary structure comprises 416 residues: Serine hydroxymethyltransferase (416 aa).

(6S)-5,6,7,8-tetrahydrofolate contacts are provided by residues L118 and 122–124 (GHL). Residue K226 is modified to N6-(pyridoxal phosphate)lysine. (6S)-5,6,7,8-tetrahydrofolate is bound by residues E242 and 350–352 (SPF).

The protein belongs to the SHMT family. As to quaternary structure, homodimer. Requires pyridoxal 5'-phosphate as cofactor.

It localises to the cytoplasm. The enzyme catalyses (6R)-5,10-methylene-5,6,7,8-tetrahydrofolate + glycine + H2O = (6S)-5,6,7,8-tetrahydrofolate + L-serine. The protein operates within one-carbon metabolism; tetrahydrofolate interconversion. It functions in the pathway amino-acid biosynthesis; glycine biosynthesis; glycine from L-serine: step 1/1. Catalyzes the reversible interconversion of serine and glycine with tetrahydrofolate (THF) serving as the one-carbon carrier. This reaction serves as the major source of one-carbon groups required for the biosynthesis of purines, thymidylate, methionine, and other important biomolecules. Also exhibits THF-independent aldolase activity toward beta-hydroxyamino acids, producing glycine and aldehydes, via a retro-aldol mechanism. The sequence is that of Serine hydroxymethyltransferase from Helicobacter pylori (strain ATCC 700392 / 26695) (Campylobacter pylori).